A 374-amino-acid polypeptide reads, in one-letter code: PqqA peptide cyclase (374 aa).

One can recognise a Radical SAM core domain in the interval 4–224 (IEPPMGLLAE…ERLKGVMVID (221 aa)). Residues Cys-18, Cys-22, and Cys-25 each coordinate [4Fe-4S] cluster.

This sequence belongs to the radical SAM superfamily. PqqE family. As to quaternary structure, interacts with PqqD. The interaction is necessary for activity of PqqE. [4Fe-4S] cluster is required as a cofactor.

The enzyme catalyses [PQQ precursor protein] + S-adenosyl-L-methionine = E-Y cross-linked-[PQQ precursor protein] + 5'-deoxyadenosine + L-methionine + H(+). Its pathway is cofactor biosynthesis; pyrroloquinoline quinone biosynthesis. Catalyzes the cross-linking of a glutamate residue and a tyrosine residue in the PqqA protein as part of the biosynthesis of pyrroloquinoline quinone (PQQ). The polypeptide is PqqA peptide cyclase (Granulibacter bethesdensis (strain ATCC BAA-1260 / CGDNIH1)).